The chain runs to 330 residues: Glycerol-3-phosphate dehydrogenase [NAD(P)+] (330 aa).

NADPH is bound by residues serine 10, tryptophan 11, arginine 31, and lysine 105. Lysine 105, glycine 135, and serine 137 together coordinate sn-glycerol 3-phosphate. Position 139 (alanine 139) interacts with NADPH. 5 residues coordinate sn-glycerol 3-phosphate: lysine 190, aspartate 243, serine 253, arginine 254, and asparagine 255. The active-site Proton acceptor is the lysine 190. Residue arginine 254 coordinates NADPH. The NADPH site is built by valine 278 and glutamate 280.

This sequence belongs to the NAD-dependent glycerol-3-phosphate dehydrogenase family.

It is found in the cytoplasm. It carries out the reaction sn-glycerol 3-phosphate + NAD(+) = dihydroxyacetone phosphate + NADH + H(+). The catalysed reaction is sn-glycerol 3-phosphate + NADP(+) = dihydroxyacetone phosphate + NADPH + H(+). It participates in membrane lipid metabolism; glycerophospholipid metabolism. Catalyzes the reduction of the glycolytic intermediate dihydroxyacetone phosphate (DHAP) to sn-glycerol 3-phosphate (G3P), the key precursor for phospholipid synthesis. The sequence is that of Glycerol-3-phosphate dehydrogenase [NAD(P)+] from Oleidesulfovibrio alaskensis (strain ATCC BAA-1058 / DSM 17464 / G20) (Desulfovibrio alaskensis).